Here is a 380-residue protein sequence, read N- to C-terminus: Histidinol-phosphate aminotransferase 1 (380 aa).

At Lys235 the chain carries N6-(pyridoxal phosphate)lysine.

The protein belongs to the class-II pyridoxal-phosphate-dependent aminotransferase family. Histidinol-phosphate aminotransferase subfamily. As to quaternary structure, homodimer. Pyridoxal 5'-phosphate is required as a cofactor.

It catalyses the reaction L-histidinol phosphate + 2-oxoglutarate = 3-(imidazol-4-yl)-2-oxopropyl phosphate + L-glutamate. Its pathway is amino-acid biosynthesis; L-histidine biosynthesis; L-histidine from 5-phospho-alpha-D-ribose 1-diphosphate: step 7/9. This Psychrobacter arcticus (strain DSM 17307 / VKM B-2377 / 273-4) protein is Histidinol-phosphate aminotransferase 1.